Here is a 943-residue protein sequence, read N- to C-terminus: Isoleucine--tRNA ligase (943 aa).

The 'HIGH' region motif lies at 59–69 (PYANGRIHLGH). Residue glutamate 577 coordinates L-isoleucyl-5'-AMP. Positions 618–622 (KMSKS) match the 'KMSKS' region motif. ATP is bound at residue lysine 621. 4 residues coordinate Zn(2+): cysteine 906, cysteine 909, cysteine 926, and cysteine 929.

Belongs to the class-I aminoacyl-tRNA synthetase family. IleS type 1 subfamily. In terms of assembly, monomer. Zn(2+) is required as a cofactor.

It localises to the cytoplasm. It carries out the reaction tRNA(Ile) + L-isoleucine + ATP = L-isoleucyl-tRNA(Ile) + AMP + diphosphate. Its function is as follows. Catalyzes the attachment of isoleucine to tRNA(Ile). As IleRS can inadvertently accommodate and process structurally similar amino acids such as valine, to avoid such errors it has two additional distinct tRNA(Ile)-dependent editing activities. One activity is designated as 'pretransfer' editing and involves the hydrolysis of activated Val-AMP. The other activity is designated 'posttransfer' editing and involves deacylation of mischarged Val-tRNA(Ile). This chain is Isoleucine--tRNA ligase, found in Stenotrophomonas maltophilia (strain K279a).